A 158-amino-acid polypeptide reads, in one-letter code: MARFEDPTRRPYKLPDLCTELNTSLQDIEITCVYCKTVLELTEVFEFAFKDLFVVYRDSIPHAACHKCIDFYSRIRELRHYSDSVYGDTLEKLTNTGLYNLLIRCLRCQKPLNPAEKLRHLNEKRRFHNIAGHYRGQCHSCCNRARQERLQRRRETQV.

2 zinc fingers span residues 32 to 68 and 105 to 141; these read CVYC…CHKC and CLRC…CHSC. Positions 156–158 match the PDZ-binding domain motif; the sequence is TQV.

Belongs to the papillomaviridae E6 protein family. Forms homodimers. Interacts with ubiquitin-protein ligase UBE3A/E6-AP and thus forms a complex with human TP53. Interacts with human NFX1 and MAGI3. Interacts with human IRF3; this interaction inhibits the establishment of antiviral state. Interacts with human TYK2; this interaction inhibits JAK-STAT activation by interferon alpha. Interacts with host DLG1; this interaction leads to the proteasomal degradation of DLG1.

The protein localises to the host cytoplasm. It is found in the host nucleus. In terms of biological role, plays a major role in the induction and maintenance of cellular transformation. Acts mainly as an oncoprotein by stimulating the destruction of many host cell key regulatory proteins. E6 associates with host UBE3A/E6-AP ubiquitin-protein ligase, and inactivates tumor suppressors TP53 and TP73 by targeting them to the 26S proteasome for degradation. In turn, DNA damage and chromosomal instabilities increase and lead to cell proliferation and cancer development. The complex E6/E6AP targets several other substrates to degradation via the proteasome including host DLG1 or NFX1, a repressor of human telomerase reverse transcriptase (hTERT). The resulting increased expression of hTERT prevents the shortening of telomere length leading to cell immortalization. Other cellular targets including BAK1, Fas-associated death domain-containing protein (FADD) and procaspase 8, are degraded by E6/E6AP causing inhibition of apoptosis. E6 also inhibits immune response by interacting with host IRF3 and TYK2. These interactions prevent IRF3 transcriptional activities and inhibit TYK2-mediated JAK-STAT activation by interferon alpha resulting in inhibition of the interferon signaling pathway. In Homo sapiens (Human), this protein is Protein E6.